The primary structure comprises 520 residues: MSQLSLSWLGLWPVAASPWLLLLLVGASWLLAHVLAWTYAFYDNCRRLRCFPQPPRRNWFWGHQGMVNPTEEGMRVLTQLVATYPQGFKVWMGPISPLLSLCHPDIIRSVINASAAIAPKDKFFYSFLEPWLGDGLLLSAGDKWSRHRRMLTPAFHFNILKPYMKIFNESVNIMHAKWQLLASEGSACLDMFEHISLMTLDSLQKCVFSFDSHCQEKPSEYIAAILELSALVSKRHHEILLHIDFLYYLTPDGQRFRRACRLVHDFTDAVIQERRRTLPSQGVDDFLQAKAKSKTLDFIDVLLLSKDEDGKKLSDEDIRAEADTFMFEGHDTTASGLSWVLYHLAKHPEYQERCRQEVQELLKDREPKEIEWDDLAHLPFLTMCMKESLRLHPPVPVISRHVTQDIVLPDGRVIPKGIICLISVFGTHHNPAVWPDPEVYDPFRFDPENIKERSPLAFIPFSAGPRNCIGQTFAMAEMKVVLALTLLRFRVLPDHTEPRRKPELVLRAEGGLWLRVEPLS.

A propeptide spanning residues M1–L4 is cleaved from the precursor. Heme contacts are provided by E328 and C468.

This sequence belongs to the cytochrome P450 family. Requires heme as cofactor. As to expression, liver. Also present in kidney: specifically expressed in the S2 and S3 segments of proximal tubules in cortex and outer medulla.

The protein localises to the microsome membrane. Its subcellular location is the endoplasmic reticulum membrane. The enzyme catalyses an organic molecule + reduced [NADPH--hemoprotein reductase] + O2 = an alcohol + oxidized [NADPH--hemoprotein reductase] + H2O + H(+). It catalyses the reaction (5Z,8Z,11Z,14Z)-eicosatetraenoate + reduced [NADPH--hemoprotein reductase] + O2 = 20-hydroxy-(5Z,8Z,11Z,14Z)-eicosatetraenoate + oxidized [NADPH--hemoprotein reductase] + H2O + H(+). It carries out the reaction (5Z,8Z,11Z)-eicosatrienoate + reduced [NADPH--hemoprotein reductase] + O2 = 20-hydroxy-(5Z,8Z,11Z)-eicosatrienoate + oxidized [NADPH--hemoprotein reductase] + H2O + H(+). The catalysed reaction is (5Z,8Z,11Z,14Z,17Z)-eicosapentaenoate + reduced [NADPH--hemoprotein reductase] + O2 = 20-hydroxy-(5Z,8Z,11Z,14Z,17Z)-eicosapentaenoate + oxidized [NADPH--hemoprotein reductase] + H2O + H(+). The enzyme catalyses (4Z,7Z,10Z,13Z,16Z,19Z)-docosahexaenoate + reduced [NADPH--hemoprotein reductase] + O2 = 22-hydroxy-(4Z,7Z,10Z,13Z,16Z,19Z)-docosahexaenoate + oxidized [NADPH--hemoprotein reductase] + H2O + H(+). It catalyses the reaction 8,9-epoxy-(5Z,11Z,14Z)-eicosatrienoate + reduced [NADPH--hemoprotein reductase] + O2 = 20-hydroxy-8,9-epoxy-(5Z,11Z,14Z)-eicosatrienoate + oxidized [NADPH--hemoprotein reductase] + H2O + H(+). It carries out the reaction (9S,10R)-epoxy-octadecanoate + reduced [NADPH--hemoprotein reductase] + O2 = 18-hydroxy-(9S,10R)-epoxy-octadecanoate + oxidized [NADPH--hemoprotein reductase] + H2O + H(+). The catalysed reaction is (9R,10S)-epoxy-octadecanoate + reduced [NADPH--hemoprotein reductase] + O2 = 18-hydroxy-(9R,10S)-epoxy-octadecanoate + oxidized [NADPH--hemoprotein reductase] + H2O + H(+). The enzyme catalyses 12,13-epoxy-(9Z)-octadecenoate + reduced [NADPH--hemoprotein reductase] + O2 = 18-hydroxy-12,13-epoxy-(9Z)-octadecenoate + oxidized [NADPH--hemoprotein reductase] + H2O + H(+). It catalyses the reaction 9,10-epoxy-(12Z)-octadecenoate + reduced [NADPH--hemoprotein reductase] + O2 = 18-hydroxy-9,10-epoxy-(12Z)-octadecenoate + oxidized [NADPH--hemoprotein reductase] + H2O + H(+). It carries out the reaction 8-hydroxy-(5Z,9E,11Z,14Z)-eicosatetraenoate + reduced [NADPH--hemoprotein reductase] + O2 = 8,20-dihydroxy-(5Z,9E,11Z,14Z)-eicosatetraenoate + oxidized [NADPH--hemoprotein reductase] + H2O + H(+). The catalysed reaction is 12-hydroxy-(5Z,8Z,10E,14Z)-eicosatetraenoate + reduced [NADPH--hemoprotein reductase] + O2 = 12,20-dihydroxy-(5Z,8Z,10E,14Z)-eicosatetraenoate + oxidized [NADPH--hemoprotein reductase] + H2O + H(+). The enzyme catalyses 12-hydroxyoctadecanoate + reduced [NADPH--hemoprotein reductase] + O2 = 12,18-dihydroxyoctadecanoate + oxidized [NADPH--hemoprotein reductase] + H2O + H(+). It catalyses the reaction docosanoate + reduced [NADPH--hemoprotein reductase] + O2 = 22-hydroxydocosanoate + oxidized [NADPH--hemoprotein reductase] + H2O + H(+). It carries out the reaction 22-hydroxydocosanoate + reduced [NADPH--hemoprotein reductase] + O2 = 22-oxodocosanoate + oxidized [NADPH--hemoprotein reductase] + 2 H2O + H(+). The catalysed reaction is 22-oxodocosanoate + reduced [NADPH--hemoprotein reductase] + O2 = docosanedioate + oxidized [NADPH--hemoprotein reductase] + H2O + 2 H(+). The enzyme catalyses tetracosanoate + reduced [NADPH--hemoprotein reductase] + O2 = 24-hydroxytetracosanoate + oxidized [NADPH--hemoprotein reductase] + H2O + H(+). It catalyses the reaction hexacosanoate + reduced [NADPH--hemoprotein reductase] + O2 = 26-hydroxyhexacosanoate + oxidized [NADPH--hemoprotein reductase] + H2O + H(+). It carries out the reaction 26-hydroxyhexacosanoate + reduced [NADPH--hemoprotein reductase] + O2 = 26-oxohexacosanoate + oxidized [NADPH--hemoprotein reductase] + 2 H2O + H(+). The catalysed reaction is 26-oxohexacosanoate + reduced [NADPH--hemoprotein reductase] + O2 = hexacosanedioate + oxidized [NADPH--hemoprotein reductase] + H2O + 2 H(+). The enzyme catalyses 3-hydroxyoctadecanoate + reduced [NADPH--hemoprotein reductase] + O2 = 3,18-dihydroxyoctadecanoate + oxidized [NADPH--hemoprotein reductase] + H2O + H(+). It catalyses the reaction 3-hydroxyhexadecanoate + reduced [NADPH--hemoprotein reductase] + O2 = 3,16-dihydroxyhexadecanoate + oxidized [NADPH--hemoprotein reductase] + H2O + H(+). It carries out the reaction leukotriene B4 + reduced [NADPH--hemoprotein reductase] + O2 = 20-hydroxy-leukotriene B4 + oxidized [NADPH--hemoprotein reductase] + H2O + H(+). The catalysed reaction is 6-trans-leukotriene B4 + reduced [NADPH--hemoprotein reductase] + O2 = 20-hydroxy-6-trans-leukotriene B4 + oxidized [NADPH--hemoprotein reductase] + H2O + H(+). The enzyme catalyses lipoxin A4 + reduced [NADPH--hemoprotein reductase] + O2 = 20-hydroxy-lipoxin A4 + oxidized [NADPH--hemoprotein reductase] + H2O + H(+). It catalyses the reaction menaquinone-4 + reduced [NADPH--hemoprotein reductase] + O2 = omega-hydroxymenaquinone-4 + oxidized [NADPH--hemoprotein reductase] + H2O + H(+). It carries out the reaction phylloquinone + reduced [NADPH--hemoprotein reductase] + O2 = omega-hydroxyphylloquinone + oxidized [NADPH--hemoprotein reductase] + H2O + H(+). The catalysed reaction is (+)-alpha-tocopherol + reduced [NADPH--hemoprotein reductase] + O2 = 13-hydroxy-alpha-tocopherol + oxidized [NADPH--hemoprotein reductase] + H2O + H(+). The enzyme catalyses gamma-tocopherol + NADPH + O2 + H(+) = 13-hydroxy-gamma-tocopherol + NADP(+) + H2O. The protein operates within lipid metabolism; arachidonate metabolism. Its pathway is lipid metabolism; leukotriene B4 degradation. It participates in cofactor degradation; phylloquinone degradation. With respect to regulation, inhibited by dietary sesamin. Functionally, a cytochrome P450 monooxygenase involved in the metabolism of various endogenous substrates, including fatty acids, eicosanoids and vitamins. Mechanistically, uses molecular oxygen inserting one oxygen atom into a substrate, and reducing the second into a water molecule, with two electrons provided by NADPH via cytochrome P450 reductase (CPR; NADPH-ferrihemoprotein reductase). Catalyzes predominantly the oxidation of the terminal carbon (omega-oxidation) of long- and very long-chain fatty acids. Displays high omega-hydroxylase activity toward polyunsaturated fatty acids (PUFAs). Participates in the conversion of arachidonic acid to omega-hydroxyeicosatetraenoic acid (20-HETE), a signaling molecule acting both as vasoconstrictive and natriuretic with overall effect on arterial blood pressure. Plays a role in the oxidative inactivation of eicosanoids, including both pro-inflammatory and anti-inflammatory mediators such as leukotriene B4 (LTB4), lipoxin A4 (LXA4), and several HETEs. Catalyzes omega-hydroxylation of 3-hydroxy fatty acids. Converts monoepoxides of linoleic acid leukotoxin and isoleukotoxin to omega-hydroxylated metabolites. Contributes to the degradation of very long-chain fatty acids (VLCFAs) by catalyzing successive omega-oxidations and chain shortening. Plays an important role in vitamin metabolism by chain shortening. Catalyzes omega-hydroxylation of the phytyl chain of tocopherols (forms of vitamin E), with preference for gamma-tocopherols over alpha-tocopherols, thus promoting retention of alpha-tocopherols in tissues. Omega-hydroxylates and inactivates phylloquinone (vitamin K1), and menaquinone-4 (MK-4, a form of vitamin K2), both acting as cofactors in blood coagulation. This Homo sapiens (Human) protein is Cytochrome P450 4F2.